The sequence spans 381 residues: Succinyl-diaminopimelate desuccinylase (381 aa).

Residue His72 coordinates Zn(2+). Asp74 is an active-site residue. Asp103 serves as a coordination point for Zn(2+). The Proton acceptor role is filled by Glu133. Glu134, Glu163, and His348 together coordinate Zn(2+).

Belongs to the peptidase M20A family. DapE subfamily. Homodimer. Zn(2+) serves as cofactor. The cofactor is Co(2+).

It catalyses the reaction N-succinyl-(2S,6S)-2,6-diaminopimelate + H2O = (2S,6S)-2,6-diaminopimelate + succinate. The protein operates within amino-acid biosynthesis; L-lysine biosynthesis via DAP pathway; LL-2,6-diaminopimelate from (S)-tetrahydrodipicolinate (succinylase route): step 3/3. Its function is as follows. Catalyzes the hydrolysis of N-succinyl-L,L-diaminopimelic acid (SDAP), forming succinate and LL-2,6-diaminopimelate (DAP), an intermediate involved in the bacterial biosynthesis of lysine and meso-diaminopimelic acid, an essential component of bacterial cell walls. The polypeptide is Succinyl-diaminopimelate desuccinylase (Anaplasma marginale (strain Florida)).